A 426-amino-acid chain; its full sequence is MRLSEFYSPTVKNVSSDVVSASHKYSIRAGIVSQTASGIYTLLPLGLMVLRKVENIIREEINAVGFSEILMPTMQPADLWKESQRYDSYGQELIRIHDRGGREMVLGPTHEEVVTDLVRSSLKSYRDLPVNLYQIQWKFRDELRPRNGILRSREFLMMDAYSFDTDFEKAMKTYDAVFRAYRKAFKRMNLQTIALKADMGAIGGSVSHEFHVLTPTGESTVYYDERALELSEMNDYGIEELKEVYAATDDMHDEKSCGIAPEDLKTARGIEVGHIFYLDDRYSRTMNVKFCNTDGHSGTHVKMGCYGIGISRLIGALIEVFHDDAGIKWPLSVAPFKVGIVNLFSKNEECKRVSERIHSVLPNDSLYDDRDDTPGVKLSRMDLIGLPWQVIVGNSFIKDGVLELKNRATGDIELLSVDDVVSRISV.

The protein belongs to the class-II aminoacyl-tRNA synthetase family. ProS type 2 subfamily. In terms of assembly, homodimer.

Its subcellular location is the cytoplasm. It carries out the reaction tRNA(Pro) + L-proline + ATP = L-prolyl-tRNA(Pro) + AMP + diphosphate. Catalyzes the attachment of proline to tRNA(Pro) in a two-step reaction: proline is first activated by ATP to form Pro-AMP and then transferred to the acceptor end of tRNA(Pro). The sequence is that of Proline--tRNA ligase from Anaplasma phagocytophilum (strain HZ).